The primary structure comprises 172 residues: Ubiquitin-conjugating enzyme E2 2 (172 aa).

The UBC core domain maps to 4–150 (PARRRLMRDF…VKETVEKSWE (147 aa)). The Glycyl thioester intermediate role is filled by Cys-88. Ser-120 bears the Phosphoserine; by SGV1 mark. A disordered region spans residues 145–172 (VEKSWEDDMDDMDDDDDDDDDDDDDEAD). The span at 151 to 172 (DDMDDMDDDDDDDDDDDDDEAD) shows a compositional bias: acidic residues.

Belongs to the ubiquitin-conjugating enzyme family. Forms a heterodimer complexes with the E3 enzymes BRE1, RAD18 and UBR1. Also interacts with UBR2, RTF1, PAF1 and the RNA polymerase II hyperphosphorylated form. The interaction with RNA polymerase II is BRE1- and PAF1-dependent. The N-terminus is blocked.

The protein resides in the cytoplasm. The protein localises to the nucleus. The catalysed reaction is S-ubiquitinyl-[E1 ubiquitin-activating enzyme]-L-cysteine + [E2 ubiquitin-conjugating enzyme]-L-cysteine = [E1 ubiquitin-activating enzyme]-L-cysteine + S-ubiquitinyl-[E2 ubiquitin-conjugating enzyme]-L-cysteine.. Its pathway is protein modification; protein ubiquitination. E2 ubiquitin-conjugating enzyme that accepts ubiquitin from the ubiquitin-activating enzyme E1 and transfers it to a E3 ubiquitin-protein ligase. In association with the E3 enzyme BRE1 and LGE1, it plays a role in transcription regulation by catalyzing the monoubiquitination of histone H2B to form H2BK123ub1. H2BK123ub1 gives a specific tag for epigenetic transcriptional activation, elongation by RNA polymerase II, telomeric silencing, and is also a prerequisite for H3K4me and H3K79me formation. In association with the E3 enzyme RAD18, it catalyzes the monoubiquitination of POL30 'Lys-164', involved in postreplication repair of UV-damaged DNA. The RAD6/UBC2-RAD18 complex is also involved in prevention of spontaneous mutations caused by 7,8-dihydro-8-oxoguanine. In association with the E3 enzyme UBR1, is involved in N-end rule-dependent protein degradation. Also involved in sporulation. This chain is Ubiquitin-conjugating enzyme E2 2 (RAD6), found in Saccharomyces cerevisiae (strain ATCC 204508 / S288c) (Baker's yeast).